A 465-amino-acid chain; its full sequence is Probable citrate synthase, mitochondrial (465 aa).

Residues His303, His349, and Asp404 contribute to the active site.

The protein belongs to the citrate synthase family. In terms of assembly, homodimer.

It is found in the mitochondrion matrix. The enzyme catalyses oxaloacetate + acetyl-CoA + H2O = citrate + CoA + H(+). It functions in the pathway carbohydrate metabolism; tricarboxylic acid cycle; isocitrate from oxaloacetate: step 1/2. This Glossina morsitans morsitans (Savannah tsetse fly) protein is Probable citrate synthase, mitochondrial.